A 121-amino-acid chain; its full sequence is Large ribosomal subunit protein uL18 (121 aa).

This sequence belongs to the universal ribosomal protein uL18 family. As to quaternary structure, part of the 50S ribosomal subunit; part of the 5S rRNA/L5/L18/L25 subcomplex. Contacts the 5S and 23S rRNAs.

Functionally, this is one of the proteins that bind and probably mediate the attachment of the 5S RNA into the large ribosomal subunit, where it forms part of the central protuberance. The polypeptide is Large ribosomal subunit protein uL18 (Roseiflexus castenholzii (strain DSM 13941 / HLO8)).